The primary structure comprises 497 residues: Glycine receptor subunit beta (497 aa).

The N-terminal stretch at 1–22 (MKFLLTTAFLILISLWVEEAYS) is a signal peptide. The Extracellular portion of the chain corresponds to 23 to 268 (KEKSSKKGKG…IFTLRRQVGF (246 aa)). Residue asparagine 54 is glycosylated (N-linked (GlcNAc...) asparagine). Residues arginine 108 and serine 174 each contribute to the glycine site. A disulfide bridge connects residues cysteine 183 and cysteine 197. The N-linked (GlcNAc...) asparagine glycan is linked to asparagine 242. Cysteine 243 and cysteine 255 are joined by a disulfide. Threonine 250 provides a ligand contact to glycine. Residues 269–289 (YMMGVYAPTLLIVVLSWLSFW) form a helical membrane-spanning segment. Over 290–294 (INPDA) the chain is Cytoplasmic. A helical transmembrane segment spans residues 295–315 (SAARVPLGIFSVLSLASECTT). The Extracellular portion of the chain corresponds to 316–327 (LAAELPKVSYVK). The chain crosses the membrane as a helical span at residues 328 to 349 (ALDVWLIACLLFGFASLVEYAV). The Cytoplasmic segment spans residues 350-472 (VQVMLNNPKR…KPVIPTAAKR (123 aa)). A Phosphothreonine modification is found at threonine 391. The helical transmembrane segment at 473-496 (IDLYARALFPFCFLFFNVIYWSIY) threads the bilayer.

It belongs to the ligand-gated ion channel (TC 1.A.9) family. Glycine receptor (TC 1.A.9.3) subfamily. GLRB sub-subfamily. Forms heteropentamers with glycin receptor alpha subunits. Heteropentamers with GLRA1 can be composed of two GLRA1 and three GLRB subunits, or three GLRA1 and two GLRB subunits, or four GLRA1 subunits and one GLRB subunit. Forms heteropentamers with GLRA2. Functional GLRB-GLRA2 heteropentamers contain four GLRA2 subunits and one GLRB subunit, although alternative subunit composition cannot be excluded. Forms a heteropentamer with GLRA3. Interacts with GPHN.

Its subcellular location is the postsynaptic cell membrane. The protein resides in the synapse. The protein localises to the cell projection. It is found in the dendrite. It localises to the cell membrane. Its subcellular location is the cytoplasm. The catalysed reaction is chloride(in) = chloride(out). Channel opening is triggered by extracellular glycine. Heteropentameric channels composed of GLRB and GLRA1 are activated by lower glycine levels than homopentameric GLRA1. Subunit of heteromeric glycine-gated chloride channels. Plays an important role in the down-regulation of neuronal excitability. Contributes to the generation of inhibitory postsynaptic currents. The chain is Glycine receptor subunit beta (GLRB) from Homo sapiens (Human).